The primary structure comprises 154 residues: Lipoprotein signal peptidase (154 aa).

2 helical membrane passes run 55–75 (GHMW…IYIM) and 84–104 (LFSI…IDRV). Active-site residues include D111 and D129. The chain crosses the membrane as a helical span at residues 124–144 (IFNVADAALSVGVVLMLVYVF).

This sequence belongs to the peptidase A8 family.

It is found in the cell membrane. The enzyme catalyses Release of signal peptides from bacterial membrane prolipoproteins. Hydrolyzes -Xaa-Yaa-Zaa-|-(S,diacylglyceryl)Cys-, in which Xaa is hydrophobic (preferably Leu), and Yaa (Ala or Ser) and Zaa (Gly or Ala) have small, neutral side chains.. The protein operates within protein modification; lipoprotein biosynthesis (signal peptide cleavage). Functionally, this protein specifically catalyzes the removal of signal peptides from prolipoproteins. This chain is Lipoprotein signal peptidase, found in Listeria monocytogenes serotype 4b (strain CLIP80459).